Here is a 740-residue protein sequence, read N- to C-terminus: Ethylene receptor 1 (740 aa).

Transmembrane regions (helical) follow at residues 23-43 (ISDFFIAVAYFSIPLELIYFV), 53-73 (WVLVQFGAFIVLCGATHLINL), and 95-115 (AAVSCVTALMLVHIIPDLLSV). Residues Cys65 and His69 each coordinate Cu cation. In terms of domain architecture, GAF spans 158–307 (DRHTILKTTL…VVADQVAVAL (150 aa)). The region spanning 350–587 (VMNHEMRTPM…TVTFVVKLGI (238 aa)) is the Histidine kinase domain. His353 is modified (phosphohistidine; by autocatalysis). The region spanning 615-732 (KVLLMDENGI…KMRNVLSKLL (118 aa)) is the Response regulatory domain. 4-aspartylphosphate is present on Asp663.

This sequence belongs to the ethylene receptor family. Homodimer; disulfide-linked. Cu cation serves as cofactor. Activation probably requires a transfer of a phosphate group between a His in the transmitter domain and an Asp of the receiver domain.

The protein resides in the endoplasmic reticulum membrane. It catalyses the reaction ATP + protein L-histidine = ADP + protein N-phospho-L-histidine.. May act early in the ethylene signal transduction pathway, possibly as an ethylene receptor, or as a regulator of the pathway. The polypeptide is Ethylene receptor 1 (ETR1) (Pelargonium hortorum (Common geranium)).